Here is a 149-residue protein sequence, read N- to C-terminus: UPF0178 protein Lmo1456 (149 aa).

Belongs to the UPF0178 family.

This chain is UPF0178 protein Lmo1456, found in Listeria monocytogenes serovar 1/2a (strain ATCC BAA-679 / EGD-e).